The primary structure comprises 240 residues: Probable phosphatase Pcar_2586 (240 aa).

9 residues coordinate Zn(2+): H12, H14, H20, H45, E78, H105, H136, D197, and H199.

Belongs to the PHP family. It depends on Zn(2+) as a cofactor.

The protein is Probable phosphatase Pcar_2586 of Syntrophotalea carbinolica (strain DSM 2380 / NBRC 103641 / GraBd1) (Pelobacter carbinolicus).